We begin with the raw amino-acid sequence, 309 residues long: UDP-N-acetylenolpyruvoylglucosamine reductase (309 aa).

The FAD-binding PCMH-type domain occupies 34–199; sequence RVGGPAQVLF…TSARLRGTPA (166 aa). Arg-179 is a catalytic residue. Ser-228 serves as the catalytic Proton donor. The active site involves Glu-298.

The protein belongs to the MurB family. The cofactor is FAD.

The protein localises to the cytoplasm. The enzyme catalyses UDP-N-acetyl-alpha-D-muramate + NADP(+) = UDP-N-acetyl-3-O-(1-carboxyvinyl)-alpha-D-glucosamine + NADPH + H(+). It participates in cell wall biogenesis; peptidoglycan biosynthesis. In terms of biological role, cell wall formation. In Rhodopseudomonas palustris (strain ATCC BAA-98 / CGA009), this protein is UDP-N-acetylenolpyruvoylglucosamine reductase.